The following is a 201-amino-acid chain: Pyrrolidone-carboxylate peptidase (201 aa).

Catalysis depends on residues Glu78, Cys141, and His165.

The protein belongs to the peptidase C15 family. In terms of assembly, homotetramer.

It localises to the cytoplasm. It catalyses the reaction Release of an N-terminal pyroglutamyl group from a polypeptide, the second amino acid generally not being Pro.. In terms of biological role, removes 5-oxoproline from various penultimate amino acid residues except L-proline. This chain is Pyrrolidone-carboxylate peptidase, found in Brachyspira hyodysenteriae (strain ATCC 49526 / WA1).